The primary structure comprises 478 residues: Sodium-dependent phosphate transport protein 3 (478 aa).

N28, N47, N56, and N69 each carry an N-linked (GlcNAc...) asparagine glycan. The next 10 membrane-spanning stretches (helical) occupy residues 98-118 (ISYG…IFGA), 130-150 (SLLT…VIVI), 183-203 (SIAG…GGLI), 211-231 (FIFY…FTVI), 273-293 (LPLW…TIII), 317-337 (LPFI…DFLL), 341-361 (LLSL…LPSL), 363-383 (AVAL…LILI), 405-425 (YASF…IISS), and 442-462 (NVFF…LIFG).

Belongs to the major facilitator superfamily. Sodium/anion cotransporter family. As to expression, expressed in the liver, kidney, placenta, lung and thyroid (at protein level).

The protein resides in the apical cell membrane. It catalyses the reaction 3 Na(+)(out) + phosphate(out) = 3 Na(+)(in) + phosphate(in). The enzyme catalyses urate(out) + n chloride(in) = urate(in) + n chloride(out). Functionally, acts as a membrane potential-dependent organic anion transporter, the transport requires a low concentration of chloride ions. Mediates chloride-dependent transport of urate. Can actively transport inorganic phosphate into cells via Na(+) cotransport. This is Sodium-dependent phosphate transport protein 3 (Slc17a2) from Mus musculus (Mouse).